The following is a 213-amino-acid chain: Pyrrolidone-carboxylate peptidase (213 aa).

Catalysis depends on residues Glu78, Cys141, and His165.

This sequence belongs to the peptidase C15 family. In terms of assembly, homotetramer.

The protein localises to the cytoplasm. It carries out the reaction Release of an N-terminal pyroglutamyl group from a polypeptide, the second amino acid generally not being Pro.. Removes 5-oxoproline from various penultimate amino acid residues except L-proline. This Clostridium perfringens (strain ATCC 13124 / DSM 756 / JCM 1290 / NCIMB 6125 / NCTC 8237 / Type A) protein is Pyrrolidone-carboxylate peptidase.